A 351-amino-acid polypeptide reads, in one-letter code: N6-Methyl-AMP deaminase (351 aa).

Zn(2+)-binding residues include histidine 23 and histidine 25. N(6)-methyl-AMP-binding positions include histidine 25, asparagine 27, histidine 73, 105–108, aspartate 147, and glycine 180; that span reads STPR. Histidine 207 provides a ligand contact to Zn(2+). The N(6)-methyl-AMP site is built by glutamate 210, aspartate 292, and aspartate 293. The active-site Proton donor is the glutamate 210. A Zn(2+)-binding site is contributed by aspartate 292.

It belongs to the metallo-dependent hydrolases superfamily. Adenosine and AMP deaminases family. As to quaternary structure, monomer. Zn(2+) is required as a cofactor.

The catalysed reaction is N(6)-methyl-AMP + H2O + H(+) = IMP + methylamine. Its function is as follows. Catalyzes the hydrolysis of the free cytosolic methylated adenosine nucleotide N(6)-methyl-AMP (N6-mAMP) to produce inositol monophosphate (IMP) and methylamine. Is required for the catabolism of cytosolic N6-mAMP, which is derived from the degradation of mRNA containing N6-methylated adenine (m6A). This chain is N6-Methyl-AMP deaminase, found in Bos taurus (Bovine).